Consider the following 1849-residue polypeptide: Breast cancer type 1 susceptibility protein homolog (1849 aa).

At methionine 1 the chain carries N-acetylmethionine. The RING-type zinc-finger motif lies at 24–65; it reads CPICLELIKEPVSTKCDHIFCKFCMLKLLNQKKGPSQCPLCK. At serine 114 the chain carries Phosphoserine. Residues lysine 301 and lysine 339 each participate in a glycyl lysine isopeptide (Lys-Gly) (interchain with G-Cter in SUMO2) cross-link. Residues serine 395, serine 398, serine 423, and serine 434 each carry the phosphoserine modification. Residues lysine 457 and lysine 517 each participate in a glycyl lysine isopeptide (Lys-Gly) (interchain with G-Cter in SUMO2) cross-link. Basic and acidic residues predominate over residues 530-542; sequence KMTEGTDQTEQKC. Disordered regions lie at residues 530–558 and 620–662; these read KMTEGTDQTEQKCHGMNITSDGHENKTKR and ELEL…RQSQ. A phosphoserine mark is found at serine 691, serine 711, and serine 720. Residues 882–912 are disordered; sequence SGSLRDQSPRDPLKCRQKEDSQGKSESKSQH. Basic and acidic residues predominate over residues 888-910; that stretch reads QSPRDPLKCRQKEDSQGKSESKS. Lysine 981 participates in a covalent cross-link: Glycyl lysine isopeptide (Lys-Gly) (interchain with G-Cter in SUMO2). The residue at position 982 (serine 982) is a Phosphoserine; by CHEK2. Position 1002 is a phosphoserine (serine 1002). Positions 1036-1061 are enriched in low complexity; the sequence is NSVNEVGSSTNEVGSSVNEVGSSGEN. The segment at 1036–1070 is disordered; sequence NSVNEVGSSTNEVGSSVNEVGSSGENIQAEPGRNR. A Glycyl lysine isopeptide (Lys-Gly) (interchain with G-Cter in SUMO2) cross-link involves residue lysine 1073. Serine 1138, serine 1184, serine 1211, serine 1212, serine 1274, serine 1323, serine 1330, serine 1336, and serine 1382 each carry phosphoserine. The disordered stretch occupies residues 1172–1211; the sequence is FSESVQKGEFRGSPGPFTHTHLAQGHQRGAGKLESEETVS. Disordered regions lie at residues 1321 to 1389, 1412 to 1433, and 1452 to 1493; these read YQSE…ILTT, VLERHGSQPSHSSASLTADSRG, and SEKS…RSSA. Residues 1336-1360 show a composition bias toward acidic residues; that stretch reads SDDEERETGLEEDSCQEEQSVDSDL. Polar residues-rich tracts occupy residues 1370–1389 and 1418–1429; these read ETSLSEDGVGLSSQSDILTT and SQPSHSSASLTA. At threonine 1389 the chain carries Phosphothreonine. An interaction with PALB2 region spans residues 1392–1419; sequence RDTMQDNLLKLQQEMAELEAVLERHGSQ. Phosphoserine is present on residues serine 1418, serine 1452, and serine 1518. Disordered regions lie at residues 1562–1590 and 1621–1640; these read SLFSHEPESDPSEDRAAEPAHVHSMPPSA and REESMSKEKPEVISSTERSK. Basic and acidic residues-rich tracts occupy residues 1566–1582 and 1621–1631; these read HEPESDPSEDRAAEPAH and REESMSKEKPE. BRCT domains lie at 1642–1729 and 1749–1848; these read RLSM…DFEV and RDKK…TYLV.

In terms of assembly, heterodimer with BARD1. Part of the BRCA1-associated genome surveillance complex (BASC), which contains BRCA1, MSH2, MSH6, MLH1, ATM, BLM, PMS2 and the MRE11-RAD50-NBN protein (MRN) complex. This association could be a dynamic process changing throughout the cell cycle and within subnuclear domains. Component of the BRCA1-A complex, at least composed of BRCA1, BARD1, UIMC1/RAP80, ABRAXAS1, BRCC3/BRCC36, BABAM2 and BABAM1/NBA1. Interacts (via the BRCT domains) with ABRAXAS1 (phosphorylated form); this is important for recruitment to sites of DNA damage. Can form a heterotetramer with two molecules of ABRAXAS1 (phosphorylated form). Component of the BRCA1-RBBP8 complex. Interacts (via the BRCT domains) with RBBP8 ('Ser-327' phosphorylated form); the interaction ubiquitinates RBBP8, regulates CHEK1 activation, and involves RBBP8 in BRCA1-dependent G2/M checkpoint control on DNA damage. Associates with RNA polymerase II holoenzyme. Interacts with SMC1A, NELFB, DCLRE1C, CLSPN. CHEK1, CHEK2, BAP1, BRCC3, UBXN1 and PCLAF. Interacts (via BRCT domains) with BRIP1 (phosphorylated form). Interacts with FANCD2 (ubiquitinated form). Interacts with H2AX (phosphorylated on 'Ser-140'). Interacts (via the BRCT domains) with ACACA (phosphorylated form); the interaction prevents dephosphorylation of ACACA. Part of a BRCA complex containing BRCA1, BRCA2 and PALB2. Interacts directly with PALB2; the interaction is essential for its function in HRR. Interacts directly with BRCA2; the interaction occurs only in the presence of PALB2 which serves as the bridging protein. Interacts (via the BRCT domains) with LMO4; the interaction represses the transcriptional activity of BRCA1. Interacts (via the BRCT domains) with CCAR2 (via N-terminus); the interaction represses the transcriptional activator activity of BRCA1. Interacts with EXD2. Interacts (via C-terminus) with DHX9; this interaction is direct and links BRCA1 to the RNA polymerase II holoenzyme. Interacts with DNA helicase ZGRF1; the interaction is increased following DNA damage induction. Phosphorylated in response to IR, UV, and various stimuli that cause checkpoint activation, probably by ATM or ATR. Phosphorylation at Ser-982 by CHEK2 regulates mitotic spindle assembly. Phosphorylation by AURKA regulates centrosomal microtubule nucleation. Post-translationally, autoubiquitinated, undergoes 'Lys-6'-linked polyubiquitination. 'Lys-6'-linked polyubiquitination does not promote degradation.

It localises to the nucleus. The protein resides in the chromosome. Its subcellular location is the cytoplasm. The enzyme catalyses S-ubiquitinyl-[E2 ubiquitin-conjugating enzyme]-L-cysteine + [acceptor protein]-L-lysine = [E2 ubiquitin-conjugating enzyme]-L-cysteine + N(6)-ubiquitinyl-[acceptor protein]-L-lysine.. Its pathway is protein modification; protein ubiquitination. E3 ubiquitin-protein ligase that specifically mediates the formation of 'Lys-6'-linked polyubiquitin chains and plays a central role in DNA repair by facilitating cellular responses to DNA damage. It is unclear whether it also mediates the formation of other types of polyubiquitin chains. The BRCA1-BARD1 heterodimer coordinates a diverse range of cellular pathways such as DNA damage repair, ubiquitination and transcriptional regulation to maintain genomic stability. Regulates centrosomal microtubule nucleation. Required for appropriate cell cycle arrests after ionizing irradiation in both the S-phase and the G2 phase of the cell cycle. Required for FANCD2 targeting to sites of DNA damage. Inhibits lipid synthesis by binding to inactive phosphorylated ACACA and preventing its dephosphorylation. Contributes to homologous recombination repair (HRR) via its direct interaction with PALB2, fine-tunes recombinational repair partly through its modulatory role in the PALB2-dependent loading of BRCA2-RAD51 repair machinery at DNA breaks. Component of the BRCA1-RBBP8 complex which regulates CHEK1 activation and controls cell cycle G2/M checkpoints on DNA damage via BRCA1-mediated ubiquitination of RBBP8. Acts as a transcriptional activator. This Bos taurus (Bovine) protein is Breast cancer type 1 susceptibility protein homolog (BRCA1).